Consider the following 347-residue polypeptide: Ribosomal RNA small subunit methyltransferase C (347 aa).

The protein belongs to the methyltransferase superfamily. RsmC family. As to quaternary structure, monomer.

The protein localises to the cytoplasm. The enzyme catalyses guanosine(1207) in 16S rRNA + S-adenosyl-L-methionine = N(2)-methylguanosine(1207) in 16S rRNA + S-adenosyl-L-homocysteine + H(+). Functionally, specifically methylates the guanine in position 1207 of 16S rRNA in the 30S particle. The sequence is that of Ribosomal RNA small subunit methyltransferase C from Yersinia pseudotuberculosis serotype O:1b (strain IP 31758).